The primary structure comprises 919 residues: Transcriptional regulatory protein EDS1 (919 aa).

The interval 1 to 54 is disordered; that stretch reads MSHHVPNLYGTPIRDPHEHKRNSASMGEVNQSVSSRNCERGSEKGTKQRKKASR. Residues 23-36 show a composition bias toward polar residues; that stretch reads SASMGEVNQSVSSR. The span at 37 to 46 shows a compositional bias: basic and acidic residues; it reads NCERGSEKGT. The zn(2)-C6 fungal-type DNA-binding region spans 56 to 85; that stretch reads CDQCRRKRIKCRFDKHTGVCQGCLEVGEKC. The tract at residues 297–338 is disordered; it reads AGCPNKKLGTDGRSDKWDKNSTWKPVYRSSNPSHPSTEKNVS. The span at 304 to 317 shows a compositional bias: basic and acidic residues; the sequence is LGTDGRSDKWDKNS. Residues 318-338 are compositionally biased toward polar residues; sequence TWKPVYRSSNPSHPSTEKNVS.

In terms of assembly, binds DNA in a sequence-specific manner.

It is found in the nucleus. The protein is Transcriptional regulatory protein EDS1 (EDS1) of Saccharomyces cerevisiae (strain Lalvin EC1118 / Prise de mousse) (Baker's yeast).